The following is a 300-amino-acid chain: Alpha-tubulin N-acetyltransferase 1 (300 aa).

The N-acetyltransferase domain occupies 1–190 (MEFPFDVDAL…NNFVIFEGFF (190 aa)). Lys56 is subject to N6-acetyllysine; by autocatalysis. Acetyl-CoA is bound at residue 124–137 (FYIHESLQRHGHGR). At Lys146 the chain carries N6-acetyllysine; by autocatalysis. Residue 160-169 (SQKLLKFLNK) participates in acetyl-CoA binding. An N6-acetyllysine; by autocatalysis mark is found at Lys210 and Lys221. 2 disordered regions span residues 229–263 (PLNR…RPFV) and 280–300 (TARL…RRTR). Ser249 and Ser253 each carry phosphoserine. Asymmetric dimethylarginine is present on Arg282. Phosphoserine is present on Ser292. Omega-N-methylarginine is present on Arg300.

It belongs to the acetyltransferase ATAT1 family. As to quaternary structure, component of the BBSome complex. Interacts with AP2 alpha-adaptins, including AP2A2, but not with AP1 gamma-adaptin (AP1G1/AP1G2); this interaction is required for efficient alpha-tubulin acetylation, hence clathrin-coated pits are sites of microtubule acetylation. Post-translationally, autoacetylation strongly increases tubulin acetylation.

It localises to the cytoplasm. Its subcellular location is the membrane. The protein resides in the clathrin-coated pit. It is found in the cell junction. The protein localises to the focal adhesion. It localises to the cell projection. Its subcellular location is the axon. The protein resides in the cytoskeleton. It is found in the spindle. It catalyses the reaction L-lysyl-[alpha-tubulin] + acetyl-CoA = N(6)-acetyl-L-lysyl-[alpha-tubulin] + CoA + H(+). Its function is as follows. Specifically acetylates 'Lys-40' in alpha-tubulin on the lumenal side of microtubules. Promotes microtubule destabilization and accelerates microtubule dynamics; this activity may be independent of acetylation activity. Acetylates alpha-tubulin with a slow enzymatic rate, due to a catalytic site that is not optimized for acetyl transfer. Enters the microtubule through each end and diffuses quickly throughout the lumen of microtubules. Acetylates only long/old microtubules because of its slow acetylation rate since it does not have time to act on dynamically unstable microtubules before the enzyme is released. Required for normal sperm flagellar function. Promotes directional cell locomotion and chemotaxis, through AP2A2-dependent acetylation of alpha-tubulin at clathrin-coated pits that are concentrated at the leading edge of migrating cells. May facilitate primary cilium assembly. The sequence is that of Alpha-tubulin N-acetyltransferase 1 from Sus scrofa (Pig).